The primary structure comprises 466 residues: Argininosuccinate lyase (466 aa).

Belongs to the lyase 1 family. Argininosuccinate lyase subfamily.

The protein localises to the cytoplasm. It catalyses the reaction 2-(N(omega)-L-arginino)succinate = fumarate + L-arginine. It functions in the pathway amino-acid biosynthesis; L-arginine biosynthesis; L-arginine from L-ornithine and carbamoyl phosphate: step 3/3. In Roseobacter denitrificans (strain ATCC 33942 / OCh 114) (Erythrobacter sp. (strain OCh 114)), this protein is Argininosuccinate lyase.